We begin with the raw amino-acid sequence, 1059 residues long: Disks large-associated protein 2 (1059 aa).

Disordered stretches follow at residues 31–56 and 244–311; these read GEPE…EEDI and TKSH…SDST. Residues 244-261 are compositionally biased toward polar residues; it reads TKSHSLEGSSKSNINGTK. Basic and acidic residues predominate over residues 262 to 271; it reads SEGRMDDHHQ. The segment covering 272 to 285 has biased composition (basic residues); sequence SHLSKHSKRSKSKE. A phosphoserine mark is found at Ser-302, Ser-308, Ser-390, and Ser-456. 2 disordered regions span residues 446–466 and 632–669; these read GDEE…VALR and VTAQ…NSMD. The segment covering 632–645 has biased composition (polar residues); it reads VTAQSSTESTQDAY. Residues Ser-667, Ser-670, Ser-673, and Ser-720 each carry the phosphoserine modification. The disordered stretch occupies residues 723–756; sequence VQDSEFPDHQPYPRSDVETATDSDTESRGLREYH. A Phosphothreonine modification is found at Thr-743. Ser-745 carries the post-translational modification Phosphoserine. Positions 747 to 756 are enriched in basic and acidic residues; the sequence is TESRGLREYH. Ser-776, Ser-811, Ser-983, and Ser-1012 each carry phosphoserine. A disordered region spans residues 985–1024; the sequence is ERKEERKIPPPIPKKPPKGKFPITREKSLDLPDRQRQEAR. The span at 1007-1024 shows a compositional bias: basic and acidic residues; it reads ITREKSLDLPDRQRQEAR.

Belongs to the SAPAP family. Interacts with DLG4/PSD-95. Expressed in various brain areas.

The protein localises to the cell membrane. It localises to the postsynaptic density. Its subcellular location is the synapse. Its function is as follows. May play a role in the molecular organization of synapses and neuronal cell signaling. Could be an adapter protein linking ion channel to the subsynaptic cytoskeleton. May induce enrichment of PSD-95/SAP90 at the plasma membrane. The sequence is that of Disks large-associated protein 2 from Rattus norvegicus (Rat).